A 2773-amino-acid chain; its full sequence is Peramine synthetase A (2773 aa).

The tract at residues 246–644 (FEDQVYSQPL…GRKDAQVKIR (399 aa)) is adenylation 1. In terms of domain architecture, Carrier 1 spans 774–850 (QPTCEMEERM…DLAKNCSQTL (77 aa)). At serine 811 the chain carries O-(pantetheine 4'-phosphoryl)serine. The condensation stretch occupies residues 888-1301 (QDAYPCTRLQ…MSSAEDLEQI (414 aa)). Residues 1321-1720 (ADQVQARPDS…GRKDTQVKVR (400 aa)) form an adenylation 2 region. The methylation (Met) domain stretch occupies residues 1810-1949 (IGRDFVGWSS…IIQHLASLGS (140 aa)). The tract at residues 2250-2271 (MLSESLQQKAPPTARKRLPSTA) is disordered. One can recognise a Carrier 2 domain in the interval 2267–2345 (LPSTAPERAM…HLLQTAAAGV (79 aa)). Serine 2304 is modified (O-(pantetheine 4'-phosphoryl)serine). Positions 2397-2715 (TVVLTGANGF…LQDLADTARS (319 aa)) are thiesterase (TE) domain.

This sequence belongs to the NRP synthetase family. Requires pantetheine 4'-phosphate as cofactor.

The enzyme catalyses (S)-1-pyrroline-5-carboxylate + L-arginine + S-adenosyl-L-methionine + 2 ATP = peramine + 2 AMP + S-adenosyl-L-homocysteine + 2 diphosphate + H2O + 2 H(+). In terms of biological role, nonribosomal peptide synthetase involved in the biosynthesis of peramine, a pyrrolopyrazine synthesized in association with the grass host that protects the plant from insect herbivory. The single multifunctional NRPS perA seems to be responsible for all catalytic steps in the biosynthesis of peramine. The condensation domain of perA is proposed to catalyze formation of a peptide bond between 1-pyrroline-5-carboxylate and arginine. The methylation domain of perA would catalyze the N-methylation of the alpha-amino group of arginine. The reductase domain is proposed to be responsible for reduction of the thioester and the cyclization to form an iminium ion resulting in release from the peptide synthetase. Deprotonation of this intermediate and oxidation of the pyrroline ring would give rise to peramine. This final oxidation to give the pyrrole functionality may be spontaneous. The sequence is that of Peramine synthetase A from Epichloe festucae (strain Fl1).